Reading from the N-terminus, the 121-residue chain is Large ribosomal subunit protein uL22 (121 aa).

The protein belongs to the universal ribosomal protein uL22 family. Part of the 50S ribosomal subunit.

Its function is as follows. This protein binds specifically to 23S rRNA; its binding is stimulated by other ribosomal proteins, e.g. L4, L17, and L20. It is important during the early stages of 50S assembly. It makes multiple contacts with different domains of the 23S rRNA in the assembled 50S subunit and ribosome. In terms of biological role, the globular domain of the protein is located near the polypeptide exit tunnel on the outside of the subunit, while an extended beta-hairpin is found that lines the wall of the exit tunnel in the center of the 70S ribosome. This is Large ribosomal subunit protein uL22 from Synechococcus sp. (strain CC9605).